Consider the following 353-residue polypeptide: Phospho-N-acetylmuramoyl-pentapeptide-transferase (353 aa).

A run of 10 helical transmembrane segments spans residues Leu-24–Ala-44, Thr-66–Ala-86, Leu-88–Phe-108, Phe-129–Asp-149, Pro-160–Thr-180, Gly-192–Ala-212, Val-229–Tyr-249, Val-256–Val-276, Ile-281–Val-301, and Lys-330–Leu-350.

Belongs to the glycosyltransferase 4 family. MraY subfamily. Mg(2+) serves as cofactor.

Its subcellular location is the cell inner membrane. The enzyme catalyses UDP-N-acetyl-alpha-D-muramoyl-L-alanyl-gamma-D-glutamyl-meso-2,6-diaminopimeloyl-D-alanyl-D-alanine + di-trans,octa-cis-undecaprenyl phosphate = di-trans,octa-cis-undecaprenyl diphospho-N-acetyl-alpha-D-muramoyl-L-alanyl-D-glutamyl-meso-2,6-diaminopimeloyl-D-alanyl-D-alanine + UMP. The protein operates within cell wall biogenesis; peptidoglycan biosynthesis. Catalyzes the initial step of the lipid cycle reactions in the biosynthesis of the cell wall peptidoglycan: transfers peptidoglycan precursor phospho-MurNAc-pentapeptide from UDP-MurNAc-pentapeptide onto the lipid carrier undecaprenyl phosphate, yielding undecaprenyl-pyrophosphoryl-MurNAc-pentapeptide, known as lipid I. The polypeptide is Phospho-N-acetylmuramoyl-pentapeptide-transferase (Helicobacter pylori (strain Shi470)).